Reading from the N-terminus, the 340-residue chain is DNA-directed RNA polymerase subunit alpha (340 aa).

Residues 1-233 (MYRNWRDLIS…EQLSIFINFD (233 aa)) are alpha N-terminal domain (alpha-NTD). Residues 251–340 (INENLYRSVD…RLRGERKDEE (90 aa)) are alpha C-terminal domain (alpha-CTD).

The protein belongs to the RNA polymerase alpha chain family. In terms of assembly, homodimer. The RNAP catalytic core consists of 2 alpha, 1 beta, 1 beta' and 1 omega subunit. When a sigma factor is associated with the core the holoenzyme is formed, which can initiate transcription.

The enzyme catalyses RNA(n) + a ribonucleoside 5'-triphosphate = RNA(n+1) + diphosphate. DNA-dependent RNA polymerase catalyzes the transcription of DNA into RNA using the four ribonucleoside triphosphates as substrates. The sequence is that of DNA-directed RNA polymerase subunit alpha from Geobacter sulfurreducens (strain ATCC 51573 / DSM 12127 / PCA).